Consider the following 422-residue polypeptide: UDP-N-acetylglucosamine 1-carboxyvinyltransferase (422 aa).

24 to 25 (KN) serves as a coordination point for phosphoenolpyruvate. Arg-93 contributes to the UDP-N-acetyl-alpha-D-glucosamine binding site. Cys-117 acts as the Proton donor in catalysis. A 2-(S-cysteinyl)pyruvic acid O-phosphothioketal modification is found at Cys-117. Residues 122 to 126 (RPVDL), 162 to 165 (KVSV), Asp-307, and Ile-329 contribute to the UDP-N-acetyl-alpha-D-glucosamine site.

It belongs to the EPSP synthase family. MurA subfamily.

It is found in the cytoplasm. The enzyme catalyses phosphoenolpyruvate + UDP-N-acetyl-alpha-D-glucosamine = UDP-N-acetyl-3-O-(1-carboxyvinyl)-alpha-D-glucosamine + phosphate. The protein operates within cell wall biogenesis; peptidoglycan biosynthesis. In terms of biological role, cell wall formation. Adds enolpyruvyl to UDP-N-acetylglucosamine. In Vibrio atlanticus (strain LGP32) (Vibrio splendidus (strain Mel32)), this protein is UDP-N-acetylglucosamine 1-carboxyvinyltransferase.